We begin with the raw amino-acid sequence, 298 residues long: MNIKDLTTEQRNPKSLHIDSATPLEIVKIINQEDKKIADAVGTQDKEIAKAIEYASKRYREGGRLIYVGAGTSGRLGILDAVELVPTYRINPERAIGLIAGGQSAMFRAVEGAEDDLQLGEKDLKDLKLNEKDIVIGLAASGRTPYVIGCLKYANQVKALTISIACVKKSEIGKYADIAIEAVVGPEVITGSTRMKAGTAQKMILNMISTGVMIKQGKVYENVMVDVMPTNSKLVDRACRIIEVATGVSESVASDTLEKADMNVAVAITMLKTGVDKEKAMDILKECNGNISSVVNNY.

An SIS domain is found at Ala-55–Lys-218. The active-site Proton donor is Glu-83. Glu-114 is an active-site residue.

This sequence belongs to the GCKR-like family. MurNAc-6-P etherase subfamily. As to quaternary structure, homodimer.

The catalysed reaction is N-acetyl-D-muramate 6-phosphate + H2O = N-acetyl-D-glucosamine 6-phosphate + (R)-lactate. It participates in amino-sugar metabolism; N-acetylmuramate degradation. In terms of biological role, specifically catalyzes the cleavage of the D-lactyl ether substituent of MurNAc 6-phosphate, producing GlcNAc 6-phosphate and D-lactate. In Lactobacillus johnsonii (strain CNCM I-12250 / La1 / NCC 533), this protein is N-acetylmuramic acid 6-phosphate etherase.